We begin with the raw amino-acid sequence, 343 residues long: E3 ubiquitin-protein ligase SP1 (343 aa).

The helical transmembrane segment at 1–21 (MIPWGGVTCCLSAAALYLLGR) threads the bilayer. The Chloroplast intermembrane portion of the chain corresponds to 22–222 (SSGRDAEVLE…LISNLGKWSR (201 aa)). The helical transmembrane segment at 223–244 (LYKYASMGFTVLGVFLITKHVI) threads the bilayer. Residues 245-343 (DSVLERRRRR…IDLAVKTYRH (99 aa)) are Cytoplasmic-facing. The RING-type zinc finger occupies 296 to 331 (CVICLEQEYNAVFVPCGHMCCCTACSSHLTSCPLCR).

Interacts with TOC33, TOC75-3 and TOC159. In terms of processing, auto-ubiquitinated.

The protein resides in the plastid. The protein localises to the chloroplast outer membrane. It carries out the reaction S-ubiquitinyl-[E2 ubiquitin-conjugating enzyme]-L-cysteine + [acceptor protein]-L-lysine = [E2 ubiquitin-conjugating enzyme]-L-cysteine + N(6)-ubiquitinyl-[acceptor protein]-L-lysine.. The protein operates within protein modification; protein ubiquitination. Its function is as follows. E3 ubiquitin-protein ligase involved in the regulation of protein import in the chloroplast. Associates with TOC complexes and mediates ubiquitination of TOC components, promoting their degradation via the ubiquitin-proteasome system (UPS). Plays a role in the reorganization of the TOC machinery. Involved in a mechanism that regulates plastid biogenesis via UPS. Promotes stress tolerance by depleting the chloroplast protein import apparatus, which limits photosystem assembly and the potential for reactive oxygen species (ROS) formation. May act as negative regulator of programmed cell death (PCD) during biotic stress. This Arabidopsis thaliana (Mouse-ear cress) protein is E3 ubiquitin-protein ligase SP1.